The primary structure comprises 359 residues: Holliday junction branch migration complex subunit RuvB (359 aa).

The tract at residues 1-22 (MAIVSSNAEPSKGAPRPKPSRV) is disordered. Positions 13–204 (GAPRPKPSRV…FGLIQRLEFY (192 aa)) are large ATPase domain (RuvB-L). Positions 43, 44, 85, 88, 89, 90, 194, 204, and 241 each coordinate ATP. Thr89 provides a ligand contact to Mg(2+). Positions 205-276 (GQEDLQAIVM…LVDEALTLHR (72 aa)) are small ATPAse domain (RuvB-S). The interval 279-359 (GKGLDASDRR…GWPADEGDAA (81 aa)) is head domain (RuvB-H). Residues Arg334 and Arg339 each coordinate DNA.

It belongs to the RuvB family. As to quaternary structure, homohexamer. Forms an RuvA(8)-RuvB(12)-Holliday junction (HJ) complex. HJ DNA is sandwiched between 2 RuvA tetramers; dsDNA enters through RuvA and exits via RuvB. An RuvB hexamer assembles on each DNA strand where it exits the tetramer. Each RuvB hexamer is contacted by two RuvA subunits (via domain III) on 2 adjacent RuvB subunits; this complex drives branch migration. In the full resolvosome a probable DNA-RuvA(4)-RuvB(12)-RuvC(2) complex forms which resolves the HJ.

It is found in the cytoplasm. It catalyses the reaction ATP + H2O = ADP + phosphate + H(+). Its function is as follows. The RuvA-RuvB-RuvC complex processes Holliday junction (HJ) DNA during genetic recombination and DNA repair, while the RuvA-RuvB complex plays an important role in the rescue of blocked DNA replication forks via replication fork reversal (RFR). RuvA specifically binds to HJ cruciform DNA, conferring on it an open structure. The RuvB hexamer acts as an ATP-dependent pump, pulling dsDNA into and through the RuvAB complex. RuvB forms 2 homohexamers on either side of HJ DNA bound by 1 or 2 RuvA tetramers; 4 subunits per hexamer contact DNA at a time. Coordinated motions by a converter formed by DNA-disengaged RuvB subunits stimulates ATP hydrolysis and nucleotide exchange. Immobilization of the converter enables RuvB to convert the ATP-contained energy into a lever motion, pulling 2 nucleotides of DNA out of the RuvA tetramer per ATP hydrolyzed, thus driving DNA branch migration. The RuvB motors rotate together with the DNA substrate, which together with the progressing nucleotide cycle form the mechanistic basis for DNA recombination by continuous HJ branch migration. Branch migration allows RuvC to scan DNA until it finds its consensus sequence, where it cleaves and resolves cruciform DNA. The protein is Holliday junction branch migration complex subunit RuvB of Synechococcus sp. (strain CC9311).